Reading from the N-terminus, the 42-residue chain is Small protein MntS (42 aa).

It is found in the cytoplasm. In terms of biological role, required for repression of mntH by MntR. May function as a chaperone that makes manganese more available by delivering it to the necessary cellular locations when manganese is limiting. The polypeptide is Small protein MntS (mntS) (Escherichia coli (strain K12)).